A 204-amino-acid polypeptide reads, in one-letter code: ATP-dependent Clp protease proteolytic subunit (204 aa).

Serine 102 (nucleophile) is an active-site residue. The active site involves histidine 127.

This sequence belongs to the peptidase S14 family. Fourteen ClpP subunits assemble into 2 heptameric rings which stack back to back to give a disk-like structure with a central cavity, resembling the structure of eukaryotic proteasomes.

It localises to the cytoplasm. It catalyses the reaction Hydrolysis of proteins to small peptides in the presence of ATP and magnesium. alpha-casein is the usual test substrate. In the absence of ATP, only oligopeptides shorter than five residues are hydrolyzed (such as succinyl-Leu-Tyr-|-NHMec, and Leu-Tyr-Leu-|-Tyr-Trp, in which cleavage of the -Tyr-|-Leu- and -Tyr-|-Trp bonds also occurs).. In terms of biological role, cleaves peptides in various proteins in a process that requires ATP hydrolysis. Has a chymotrypsin-like activity. Plays a major role in the degradation of misfolded proteins. The protein is ATP-dependent Clp protease proteolytic subunit of Neisseria meningitidis serogroup C (strain 053442).